A 291-amino-acid chain; its full sequence is Ribose-phosphate pyrophosphokinase (291 aa).

Residues 34–36 (DGE) and 93–94 (RQ) contribute to the ATP site. 2 residues coordinate Mg(2+): H127 and D165. The active site involves K188. D-ribose 5-phosphate is bound by residues R190, D216, and 220–224 (STGGT).

It belongs to the ribose-phosphate pyrophosphokinase family. Class III (archaeal) subfamily. Requires Mg(2+) as cofactor.

The protein localises to the cytoplasm. The enzyme catalyses D-ribose 5-phosphate + ATP = 5-phospho-alpha-D-ribose 1-diphosphate + AMP + H(+). The protein operates within metabolic intermediate biosynthesis; 5-phospho-alpha-D-ribose 1-diphosphate biosynthesis; 5-phospho-alpha-D-ribose 1-diphosphate from D-ribose 5-phosphate (route I): step 1/1. In terms of biological role, involved in the biosynthesis of the central metabolite phospho-alpha-D-ribosyl-1-pyrophosphate (PRPP) via the transfer of pyrophosphoryl group from ATP to 1-hydroxyl of ribose-5-phosphate (Rib-5-P). This Sulfolobus acidocaldarius (strain ATCC 33909 / DSM 639 / JCM 8929 / NBRC 15157 / NCIMB 11770) protein is Ribose-phosphate pyrophosphokinase.